Here is a 782-residue protein sequence, read N- to C-terminus: MKISSGAINFSTIPNQVKKLITSIREHTKNGFASKITSVKNTHASLNEKLKTGKSSSIEFALPQKIKDFFQPKDKNTLNKTLITVKNIKDTNNAGKKNISAEDVSKMNAAFMRKHIANQTCDYNYRVTGAAPLPGGVSVSANNRPTVSEGRTPPVSPSLSLQATSSPSSPAEWAKKLTDALLRQKAGETLTAADRDFSNADFRNITFSKILPTSFMKRDGDIIKGFNFSNSKFTYSDISHLHFDECRFTYSTLSDVVCSNTKFSNSDMNELTLQYSITTRQQPSFINTTLKNTFIRHKANLSGVILNEPDNSSPPSVSGGGNFIRLGDIWLQMPLLWSENAVDGFLNHEHNNGKSILMTIDSLPDKYSQEKVRAMEDLVKSLRGGRLTEACIRPVESSLVSVLAHPPYTQSALISEWLGPVQERFFAHQCQTYNDVPLPAPDTYYQQRILPVLLDSFDRNSAAMTTHSGLFNQVILHCMTGVDCTDGTRQKAAALYEQYLAHPAVSPHIHNGLFGNYDGSPDWTTRAADNFLLLSSQDSDTAMMLSTDTLLTMLNPTPDTAWDNFYLLRAGENVSTAQISPVELFRHDFPVFLAAFNQQATQRRFGELIDIILSTEEHGELNQQFIAATNQKHSTVKLIDDASVSRLATIFDPLLPEGKLSPAHYQHILSAYHLTDATPQKQAETLFCLSTAFARYSSSAIFGTEHDSPPALRGYAEALMQKAWELSPAIFPSSEQFTEWSDRFHGLHGAFTCTSVVADSMQRHARKYFPSVLSSILPLAWA.

A disordered region spans residues 140–170; that stretch reads SANNRPTVSEGRTPPVSPSLSLQATSSPSSP. Over residues 157–170 the composition is skewed to low complexity; sequence PSLSLQATSSPSSP. Residue Cys753 is the Glycyl thioester intermediate of the active site.

This sequence belongs to the SopA E3 ligase family. In terms of processing, ubiquitinated in the presence of host E1 ubiquitin-activating enzyme, E2 ubiquitin-conjugating enzyme and ubiquitin.

The protein resides in the secreted. The protein localises to the host cell. It catalyses the reaction S-ubiquitinyl-[E2 ubiquitin-conjugating enzyme]-L-cysteine + [acceptor protein]-L-lysine = [E2 ubiquitin-conjugating enzyme]-L-cysteine + N(6)-ubiquitinyl-[acceptor protein]-L-lysine.. Functionally, effector proteins function to alter host cell physiology and promote bacterial survival in host tissues. This protein is an E3 ubiquitin ligase that interferes with host's ubiquitination pathway. The protein is E3 ubiquitin-protein ligase SopA (sopA) of Salmonella agona (strain SL483).